Here is a 421-residue protein sequence, read N- to C-terminus: Imidazolonepropionase (421 aa).

Fe(3+) is bound by residues His-81 and His-83. Zn(2+) contacts are provided by His-81 and His-83. The 4-imidazolone-5-propanoate site is built by Arg-90, Tyr-153, and His-186. N-formimidoyl-L-glutamate is bound at residue Tyr-153. His-251 provides a ligand contact to Fe(3+). His-251 lines the Zn(2+) pocket. Glu-254 serves as a coordination point for 4-imidazolone-5-propanoate. Asp-326 lines the Fe(3+) pocket. A Zn(2+)-binding site is contributed by Asp-326. N-formimidoyl-L-glutamate-binding residues include Asn-328 and Gly-330. Ser-331 is a 4-imidazolone-5-propanoate binding site.

Belongs to the metallo-dependent hydrolases superfamily. HutI family. The cofactor is Zn(2+). Fe(3+) serves as cofactor.

It is found in the cytoplasm. It carries out the reaction 4-imidazolone-5-propanoate + H2O = N-formimidoyl-L-glutamate. It functions in the pathway amino-acid degradation; L-histidine degradation into L-glutamate; N-formimidoyl-L-glutamate from L-histidine: step 3/3. Catalyzes the hydrolytic cleavage of the carbon-nitrogen bond in imidazolone-5-propanoate to yield N-formimidoyl-L-glutamate. It is the third step in the universal histidine degradation pathway. The protein is Imidazolonepropionase of Streptococcus pyogenes serotype M12 (strain MGAS2096).